The following is a 254-amino-acid chain: 5'/3'-nucleotidase SurE (254 aa).

A divalent metal cation-binding residues include Asp9, Asp10, Ser40, and Asn93.

This sequence belongs to the SurE nucleotidase family. A divalent metal cation is required as a cofactor.

Its subcellular location is the cytoplasm. It carries out the reaction a ribonucleoside 5'-phosphate + H2O = a ribonucleoside + phosphate. The enzyme catalyses a ribonucleoside 3'-phosphate + H2O = a ribonucleoside + phosphate. It catalyses the reaction [phosphate](n) + H2O = [phosphate](n-1) + phosphate + H(+). In terms of biological role, nucleotidase with a broad substrate specificity as it can dephosphorylate various ribo- and deoxyribonucleoside 5'-monophosphates and ribonucleoside 3'-monophosphates with highest affinity to 3'-AMP. Also hydrolyzes polyphosphate (exopolyphosphatase activity) with the preference for short-chain-length substrates (P20-25). Might be involved in the regulation of dNTP and NTP pools, and in the turnover of 3'-mononucleotides produced by numerous intracellular RNases (T1, T2, and F) during the degradation of various RNAs. This Yersinia pseudotuberculosis serotype O:1b (strain IP 31758) protein is 5'/3'-nucleotidase SurE.